Consider the following 130-residue polypeptide: Small ribosomal subunit protein uS8 (130 aa).

The protein belongs to the universal ribosomal protein uS8 family. In terms of assembly, part of the 30S ribosomal subunit. Contacts proteins S5 and S12.

In terms of biological role, one of the primary rRNA binding proteins, it binds directly to 16S rRNA central domain where it helps coordinate assembly of the platform of the 30S subunit. The chain is Small ribosomal subunit protein uS8 from Cereibacter sphaeroides (strain KD131 / KCTC 12085) (Rhodobacter sphaeroides).